Consider the following 703-residue polypeptide: FERM domain-containing protein 7 (703 aa).

The region spanning 2–282 is the FERM domain; it reads LHLKVQFLDD…EYHAFFRLSE (281 aa). The stretch at 525–552 forms a coiled coil; sequence RNMRIKSLQQDLQELQEAMARTSGRSNI.

As to expression, in the developing cerebral cortex, strong expression is observed in the ventricular and intermediate zones at 13 and 17 dpc. At 17 dpc and P0, expression appears to be restricted to the cortical plate. In neonates, highly expressed in cortex, hippocampus, cerebellum, olfactory bulb and eye with little or no expression in liver, kidney, skeletal muscle or heart muscle (at protein level).

Its subcellular location is the cell projection. It is found in the neuron projection. The protein localises to the growth cone. Plays a role in neurite development, may be through the activation of the GTPase RAC1. Plays a role in the control of eye movement and gaze stability. This Mus musculus (Mouse) protein is FERM domain-containing protein 7.